Reading from the N-terminus, the 352-residue chain is Peptide chain release factor 1 (352 aa).

N5-methylglutamine is present on glutamine 233. The interval 288–309 is disordered; it reads NAKDRKEQVGSGDRSERIRTYN. Over residues 289–306 the composition is skewed to basic and acidic residues; that stretch reads AKDRKEQVGSGDRSERIR.

It belongs to the prokaryotic/mitochondrial release factor family. In terms of processing, methylated by PrmC. Methylation increases the termination efficiency of RF1.

It localises to the cytoplasm. Functionally, peptide chain release factor 1 directs the termination of translation in response to the peptide chain termination codons UAG and UAA. The protein is Peptide chain release factor 1 (prfA) of Helicobacter pylori (strain J99 / ATCC 700824) (Campylobacter pylori J99).